A 223-amino-acid chain; its full sequence is ATP synthase subunit a 1 (223 aa).

5 consecutive transmembrane segments (helical) span residues 20–40 (QTIVMTWVIMVFLAGGSAFLT), 78–98 (YLSYLATLFLFVATAVLFTII), 107–127 (SLSTTAALALSVFVAVPLYGI), 173–193 (VMIIGILLGIAPLFFPVLMSV), and 194–214 (LGLLTGMVQAYIFSMLATVYI).

It belongs to the ATPase A chain family. F-type ATPases have 2 components, CF(1) - the catalytic core - and CF(0) - the membrane proton channel. CF(1) has five subunits: alpha(3), beta(3), gamma(1), delta(1), epsilon(1). CF(0) has four main subunits: a, b, b' and c.

Its subcellular location is the cell inner membrane. In terms of biological role, key component of the proton channel; it plays a direct role in the translocation of protons across the membrane. The protein is ATP synthase subunit a 1 of Prosthecochloris aestuarii (strain DSM 271 / SK 413).